The sequence spans 430 residues: Adenylosuccinate synthetase (430 aa).

GTP-binding positions include Gly13–Lys19 and Gly41–Thr43. The active-site Proton acceptor is Asp14. 2 residues coordinate Mg(2+): Asp14 and Gly41. IMP contacts are provided by residues Asp14–Lys17, Asn39–His42, Thr130, Arg144, Gln225, Thr240, and Arg304. His42 functions as the Proton donor in the catalytic mechanism. Ala300 to Arg306 contributes to the substrate binding site. GTP contacts are provided by residues Arg306, Lys332–Asp334, and Ser414–Gly416.

It belongs to the adenylosuccinate synthetase family. As to quaternary structure, homodimer. Mg(2+) serves as cofactor.

It localises to the cytoplasm. It catalyses the reaction IMP + L-aspartate + GTP = N(6)-(1,2-dicarboxyethyl)-AMP + GDP + phosphate + 2 H(+). It participates in purine metabolism; AMP biosynthesis via de novo pathway; AMP from IMP: step 1/2. Its function is as follows. Plays an important role in the de novo pathway of purine nucleotide biosynthesis. Catalyzes the first committed step in the biosynthesis of AMP from IMP. This is Adenylosuccinate synthetase from Xanthomonas campestris pv. campestris (strain 8004).